A 364-amino-acid chain; its full sequence is DNA replication and repair protein RecF (364 aa).

30-37 serves as a coordination point for ATP; the sequence is GNNAQGKT.

It belongs to the RecF family.

It is found in the cytoplasm. In terms of biological role, the RecF protein is involved in DNA metabolism; it is required for DNA replication and normal SOS inducibility. RecF binds preferentially to single-stranded, linear DNA. It also seems to bind ATP. The sequence is that of DNA replication and repair protein RecF from Clostridium botulinum (strain Okra / Type B1).